The primary structure comprises 261 residues: Imidazole glycerol phosphate synthase subunit HisF (261 aa).

Active-site residues include Asp11 and Asp130.

The protein belongs to the HisA/HisF family. In terms of assembly, heterodimer of HisH and HisF.

The protein resides in the cytoplasm. It carries out the reaction 5-[(5-phospho-1-deoxy-D-ribulos-1-ylimino)methylamino]-1-(5-phospho-beta-D-ribosyl)imidazole-4-carboxamide + L-glutamine = D-erythro-1-(imidazol-4-yl)glycerol 3-phosphate + 5-amino-1-(5-phospho-beta-D-ribosyl)imidazole-4-carboxamide + L-glutamate + H(+). Its pathway is amino-acid biosynthesis; L-histidine biosynthesis; L-histidine from 5-phospho-alpha-D-ribose 1-diphosphate: step 5/9. Functionally, IGPS catalyzes the conversion of PRFAR and glutamine to IGP, AICAR and glutamate. The HisF subunit catalyzes the cyclization activity that produces IGP and AICAR from PRFAR using the ammonia provided by the HisH subunit. The protein is Imidazole glycerol phosphate synthase subunit HisF of Limosilactobacillus fermentum (strain NBRC 3956 / LMG 18251) (Lactobacillus fermentum).